A 205-amino-acid chain; its full sequence is Ephrin-A1 (205 aa).

The first 17 residues, 1–17 (MEFLWAPLLGLCCSLAA), serve as a signal peptide directing secretion. Residues 18-161 (ADRHIVFWNS…THNPQAHVNP (144 aa)) form the Ephrin RBD domain. N-linked (GlcNAc...) asparagine glycosylation is present at Asn26. Cystine bridges form between Cys51/Cys92 and Cys80/Cys140. A lipid anchor (GPI-anchor amidated serine) is attached at Ser182. Positions 183 to 205 (AAPRLFPLVWAVLLLPLLLLQSQ) are cleaved as a propeptide — removed in mature form.

The protein belongs to the ephrin family. Monomer. Homodimer. Forms heterodimers with EPHA2. Binds to the receptor tyrosine kinases EPHA2, EPHA3, EPHA4, EPHA5, EPHA6 and EPHA7. Also binds with low affinity to EPHA1. Post-translationally, undergoes proteolysis by a metalloprotease to give rise to a soluble monomeric form. N-Glycosylation is required for binding to EPHA2 receptor and inducing its internalization. As to expression, expressed in myogenic progenitor cells.

It is found in the cell membrane. The protein resides in the secreted. Functionally, cell surface GPI-bound ligand for Eph receptors, a family of receptor tyrosine kinases which are crucial for migration, repulsion and adhesion during neuronal, vascular and epithelial development. Binds promiscuously Eph receptors residing on adjacent cells, leading to contact-dependent bidirectional signaling into neighboring cells. Plays an important role in angiogenesis and tumor neovascularization. The recruitment of VAV2, VAV3 and PI3-kinase p85 subunit by phosphorylated EPHA2 is critical for EFNA1-induced RAC1 GTPase activation and vascular endothelial cell migration and assembly. Exerts anti-oncogenic effects in tumor cells through activation and down-regulation of EPHA2. Activates EPHA2 by inducing tyrosine phosphorylation which leads to its internalization and degradation. Acts as a negative regulator in the tumorigenesis of gliomas by down-regulating EPHA2 and FAK. Can evoke collapse of embryonic neuronal growth cone and regulates dendritic spine morphogenesis. This Mus musculus (Mouse) protein is Ephrin-A1 (Efna1).